Here is a 112-residue protein sequence, read N- to C-terminus: MYCQRLRQLRKAHKLTMEQLAEKIGIAKSSYGGYEAESKKPPLDKLVILARLYDVSVDYILGLTDDPDPKVERKNLKEFLEKPDIHWDGYKLTPEILDPIRKILKLVTANNN.

Residues 6-60 form the HTH cro/C1-type domain; it reads LRQLRKAHKLTMEQLAEKIGIAKSSYGGYEAESKKPPLDKLVILARLYDVSVDYI. A DNA-binding region (H-T-H motif) is located at residues 17–36; that stretch reads MEQLAEKIGIAKSSYGGYEA.

This is an uncharacterized protein from Bacillus subtilis (strain 168).